The sequence spans 275 residues: Large ribosomal subunit protein uL2 (275 aa).

The tract at residues 210–275 is disordered; sequence GRNRHRGIRP…DKLIISRKKK (66 aa). Positions 257-275 are enriched in basic residues; sequence FKTRKKKASDKLIISRKKK.

The protein belongs to the universal ribosomal protein uL2 family. Part of the 50S ribosomal subunit. Forms a bridge to the 30S subunit in the 70S ribosome.

Functionally, one of the primary rRNA binding proteins. Required for association of the 30S and 50S subunits to form the 70S ribosome, for tRNA binding and peptide bond formation. It has been suggested to have peptidyltransferase activity; this is somewhat controversial. Makes several contacts with the 16S rRNA in the 70S ribosome. The chain is Large ribosomal subunit protein uL2 from Helicobacter hepaticus (strain ATCC 51449 / 3B1).